The following is a 672-amino-acid chain: Protein OS-9 (672 aa).

The first 26 residues, 1–26 (MAAEVLLSSLLGLLFLGLLLPARLTG), serve as a signal peptide directing secretion. Positions 108-230 (APCLLKTKDW…TIRTSRLCPH (123 aa)) constitute an MRH domain. C110 and C123 form a disulfide bridge. A mannooligosaccharide derivative contacts are provided by W117, W118, and Q130. N177 is a glycosylation site (N-linked (GlcNAc...) asparagine). Disulfide bonds link C181-C216 and C196-C228. Residues D182, R188, E212, and Y218 each coordinate a mannooligosaccharide derivative. Disordered regions lie at residues 261 to 355 (RQAE…NVQV), 372 to 452 (KAAE…LLPS), 511 to 548 (ENQS…RVRV), and 637 to 672 (EANK…EFDF). 5 stretches are compositionally biased toward basic and acidic residues: residues 263–281 (AESK…DTDR), 294–310 (PKKE…ESEL), 320–338 (AAAR…HEAA), 372–386 (KAAE…REQP), and 394–409 (PQRE…KDGE). Residues 414 to 435 (MEEEDGDDEEEEEEEEEDEEEQ) are compositionally biased toward acidic residues. Residues 637 to 652 (EANKERQRQSELESNY) are compositionally biased toward basic and acidic residues. Residues 663–672 (DTGDLDEFDF) show a composition bias toward acidic residues.

The protein belongs to the OS-9 family. As to quaternary structure, component of the HRD1 complex, which comprises at least SYNV1/HRD1, DERL1/2, FAM8A1, HERPUD1/HERP, OS9, SEL1L and UBE2J1. FAM8A1 is stabilized by interaction with SYNV1, which prevents its proteasomal degradation. OS9 and UBE2J1 recruitment to the complex may be mediated by SEL1L. Through this complex, may interact with ERLEC1 and HSPA5. Interacts (via C-terminus) with CPNE6 (via second C2 domain); this interaction occurs in a calcium-dependent manner in vitro. Interacts with CREB3. N-glycosylated. Post-translationally, intramolecular disulfide bonds.

The protein localises to the endoplasmic reticulum lumen. In terms of biological role, lectin component of the HRD1 complex, which functions in endoplasmic reticulum (ER) quality control and ER-associated degradation (ERAD). Specifically recognizes and binds improperly folded glycoproteins as well as hyperglycosylated proteins, retain them in the ER, and transfers them to the ubiquitination machinery and promote their degradation. Possible targets include TRPV4 as well as hyperglycosylated HSP90B1. The protein is Protein OS-9 (Os9) of Mus musculus (Mouse).